The sequence spans 453 residues: MDWKDVLRRRLASPNSDPKRKKSEQELKDEEMDLFTKYYSEWKGGRKNTNEFYKTIPRFYYRLPAEDEVLLQKLREESRAVFLQRKSRELLDNEELQNLWFLLDKHQIPPMIGEEAMINYENFLKVGEKAGPKCKQFFTAKVFAKLLHTDSYGRVSIMQFFNYVMRKVWLHQTRIGLSLYDVAGQGYLRESDLENYILELIPTLPQLDGLEKSFYSFYVCTAVRKFFFFLDPLRTGKIKIQDILACSFLDDLLELRDEELSKESQETNWFSAPSALRVYGQYLNLDKDHNGMLSKEELSRYGTATMTNVFLDRVFQECLTYDGEMDYKTYLDFVLALENRKEPAALQYIFKLLDIENKGYLNVFSLNYFFRAIQELMKIHGQDPVSFQDVKDEIFDMVKPKDPLKISLQDLINSNQGDTVTTILIDLNGFWTYENREALVANDNENSADLDDT.

Residues 1–27 (MDWKDVLRRRLASPNSDPKRKKSEQEL) are disordered. EF-hand domains follow at residues 273 to 308 (PSAL…TMTN) and 341 to 376 (KEPA…IQEL). Residues Asp286, Asp288, Asn290, Met292, and Glu297 each coordinate Ca(2+).

Interacts with MCM3AP/GANP, PPP5C, and the phosphatase 2A core enzyme composed of the PPP2CA catalytic subunit and the constant regulatory subunit PPP2R1A. Finds in a complex with ABCB1, TFPI2 and PPP2R3C; leading to the dephosphorylation of ABCB1.

Its subcellular location is the nucleus. It localises to the cytoplasm. May regulate MCM3AP phosphorylation through phosphatase recruitment. May act as a negative regulator of ABCB1 expression and function through the dephosphorylation of ABCB1 by TFPI2/PPP2R3C complex. May play a role in the activation-induced cell death of B-cells. This chain is Serine/threonine-protein phosphatase 2A regulatory subunit B'' subunit gamma (Ppp2r3c), found in Rattus norvegicus (Rat).